We begin with the raw amino-acid sequence, 173 residues long: Archaemetzincin (173 aa).

Histidine 130 is a Zn(2+) binding site. Glutamate 131 serves as the catalytic Proton acceptor. The Zn(2+) site is built by histidine 134, histidine 140, cysteine 141, cysteine 146, cysteine 165, and cysteine 168.

The protein belongs to the peptidase M54 family. Monomer. Zn(2+) serves as cofactor.

Probable zinc metalloprotease whose natural substrate is unknown. This Haloquadratum walsbyi (strain DSM 16790 / HBSQ001) protein is Archaemetzincin.